The primary structure comprises 143 residues: Ribosome maturation factor RimP (143 aa).

Belongs to the RimP family.

Its subcellular location is the cytoplasm. Functionally, required for maturation of 30S ribosomal subunits. This chain is Ribosome maturation factor RimP, found in Borrelia recurrentis (strain A1).